Consider the following 142-residue polypeptide: Thioredoxin-like protein YLS8 (142 aa).

The protein belongs to the DIM1 family. In terms of tissue distribution, expressed in roots, leaves, stems, cauline leaves and flowers.

This Arabidopsis thaliana (Mouse-ear cress) protein is Thioredoxin-like protein YLS8 (YLS8).